Reading from the N-terminus, the 248-residue chain is Probable transcriptional regulatory protein Pfl01_4410 (248 aa).

It belongs to the TACO1 family.

The protein localises to the cytoplasm. This chain is Probable transcriptional regulatory protein Pfl01_4410, found in Pseudomonas fluorescens (strain Pf0-1).